A 304-amino-acid polypeptide reads, in one-letter code: Putative S-adenosyl-L-methionine-dependent methyltransferase MAV_1058 (304 aa).

Residues Asp-128 and 157-158 (DL) contribute to the S-adenosyl-L-methionine site.

This sequence belongs to the UPF0677 family.

Its function is as follows. Exhibits S-adenosyl-L-methionine-dependent methyltransferase activity. This chain is Putative S-adenosyl-L-methionine-dependent methyltransferase MAV_1058, found in Mycobacterium avium (strain 104).